The sequence spans 274 residues: MSGTKIHPTALVEKGAQLGENVFVGPFCHISSEAVIGDGCSLMSHVVIMGKTTLGADSKVFSHAILGAEPQDNKHKGGYTTLSIGKNCTIREGVTMHRGSDSSVGMTIVGDNCQFFCYAHIAHDCRVGNNVTFANNVMIAGHVTVGDYVIIGGGAAVHQFVRVGHHAFIGGVSALVGDLIPYGTAVGVQAKLAGLNIIGMKRAGLERKDIHALRHAVAMLFDHSKPFKERVSDVASFYPASQSVVDVVNFIKEKGKRFYCTPKFEGDRIKENKD.

The protein belongs to the transferase hexapeptide repeat family. LpxA subfamily. In terms of assembly, homotrimer.

The protein localises to the cytoplasm. It catalyses the reaction a (3R)-hydroxyacyl-[ACP] + UDP-N-acetyl-alpha-D-glucosamine = a UDP-3-O-[(3R)-3-hydroxyacyl]-N-acetyl-alpha-D-glucosamine + holo-[ACP]. It functions in the pathway glycolipid biosynthesis; lipid IV(A) biosynthesis; lipid IV(A) from (3R)-3-hydroxytetradecanoyl-[acyl-carrier-protein] and UDP-N-acetyl-alpha-D-glucosamine: step 1/6. Functionally, involved in the biosynthesis of lipid A, a phosphorylated glycolipid that anchors the lipopolysaccharide to the outer membrane of the cell. The polypeptide is Acyl-[acyl-carrier-protein]--UDP-N-acetylglucosamine O-acyltransferase (Bartonella henselae (strain ATCC 49882 / DSM 28221 / CCUG 30454 / Houston 1) (Rochalimaea henselae)).